A 491-amino-acid polypeptide reads, in one-letter code: Ribulose-1,5 bisphosphate carboxylase/oxygenase large subunit N-methyltransferase, chloroplastic (491 aa).

The SET domain occupies 67-291 (EGVVTTKTPV…AGDQLFIQYD (225 aa)).

The protein belongs to the class V-like SAM-binding methyltransferase superfamily. Plant protein-lysine LSMT methyltransferase family.

The protein resides in the plastid. Its subcellular location is the chloroplast. It carries out the reaction L-lysyl-[ribulose-1,5-bisphosphate carboxylase] + 3 S-adenosyl-L-methionine = N(6),N(6),N(6)-trimethyl-L-lysyl-[ribulose-1,5-bisphosphate carboxylase] + 3 S-adenosyl-L-homocysteine + 3 H(+). Methylates 'Lys-14' of the large subunit of RuBisCO. The protein is Ribulose-1,5 bisphosphate carboxylase/oxygenase large subunit N-methyltransferase, chloroplastic (RBCMT) of Nicotiana tabacum (Common tobacco).